Reading from the N-terminus, the 152-residue chain is 2-C-methyl-D-erythritol 2,4-cyclodiphosphate synthase (152 aa).

Residues D8 and H10 each contribute to the a divalent metal cation site. 4-CDP-2-C-methyl-D-erythritol 2-phosphate is bound by residues 8 to 10 (DSH) and 34 to 35 (HS). H42 is a binding site for a divalent metal cation. 4-CDP-2-C-methyl-D-erythritol 2-phosphate is bound by residues 56-58 (DIG) and 61-65 (FPDTD).

It belongs to the IspF family. Homotrimer. It depends on a divalent metal cation as a cofactor.

The enzyme catalyses 4-CDP-2-C-methyl-D-erythritol 2-phosphate = 2-C-methyl-D-erythritol 2,4-cyclic diphosphate + CMP. It participates in isoprenoid biosynthesis; isopentenyl diphosphate biosynthesis via DXP pathway; isopentenyl diphosphate from 1-deoxy-D-xylulose 5-phosphate: step 4/6. Involved in the biosynthesis of isopentenyl diphosphate (IPP) and dimethylallyl diphosphate (DMAPP), two major building blocks of isoprenoid compounds. Catalyzes the conversion of 4-diphosphocytidyl-2-C-methyl-D-erythritol 2-phosphate (CDP-ME2P) to 2-C-methyl-D-erythritol 2,4-cyclodiphosphate (ME-CPP) with a corresponding release of cytidine 5-monophosphate (CMP). The polypeptide is 2-C-methyl-D-erythritol 2,4-cyclodiphosphate synthase (Thermus thermophilus (strain ATCC BAA-163 / DSM 7039 / HB27)).